Reading from the N-terminus, the 1143-residue chain is Major DNA-binding protein (1143 aa).

The tract at residues 1140–1143 is required for nuclear localization; that stretch reads RMRL.

This sequence belongs to the herpesviridae major DNA-binding protein family. In terms of assembly, homooligomers. Forms double-helical filaments necessary for the formation of replication compartments within the host nucleus. Interacts with the origin-binding protein. Interacts with the helicase primase complex; this interaction stimulates primer synthesis activity of the helicase-primase complex. Interacts with the DNA polymerase. Interacts with the alkaline exonuclease; this interaction increases its nuclease processivity.

The protein resides in the host nucleus. In terms of biological role, plays several crucial roles in viral infection. Participates in the opening of the viral DNA origin to initiate replication by interacting with the origin-binding protein. May disrupt loops, hairpins and other secondary structures present on ssDNA to reduce and eliminate pausing of viral DNA polymerase at specific sites during elongation. Promotes viral DNA recombination by performing strand-transfer, characterized by the ability to transfer a DNA strand from a linear duplex to a complementary single-stranded DNA circle. Can also catalyze the renaturation of complementary single strands. Additionally, reorganizes the host cell nucleus, leading to the formation of prereplicative sites and replication compartments. This process is driven by the protein which can form double-helical filaments in the absence of DNA. The chain is Major DNA-binding protein from Elephantid herpesvirus 1 (isolate Asian elephant/Berlin/Kiba/1998) (EIHV-1).